The following is a 239-amino-acid chain: Ribosomal RNA small subunit methyltransferase G (239 aa).

S-adenosyl-L-methionine is bound by residues Gly77, Phe82, 128–129, and Arg147; that span reads AE. The interval 216 to 239 is disordered; that stretch reads EKKKQTPKKYPRKPGTPNKSPIEG.

This sequence belongs to the methyltransferase superfamily. RNA methyltransferase RsmG family.

The protein resides in the cytoplasm. Its function is as follows. Specifically methylates the N7 position of guanine in position 535 of 16S rRNA. The chain is Ribosomal RNA small subunit methyltransferase G from Bacillus pumilus (strain SAFR-032).